We begin with the raw amino-acid sequence, 172 residues long: DNA-directed RNA polymerase II subunit RPB7 (172 aa).

This sequence belongs to the eukaryotic RPB7/RPC8 RNA polymerase subunit family. As to quaternary structure, component of the RNA polymerase II (Pol II) complex consisting of 12 subunits. RPB4 and RPB7 form a subcomplex that protrudes from the 10-subunit Pol II core complex.

The protein localises to the nucleus. Its function is as follows. DNA-dependent RNA polymerase catalyzes the transcription of DNA into RNA using the four ribonucleoside triphosphates as substrates. Component of RNA polymerase II which synthesizes mRNA precursors and many functional non-coding RNAs. Pol II is the central component of the basal RNA polymerase II transcription machinery. It is composed of mobile elements that move relative to each other. RPB7 is part of a subcomplex with RPB4 that binds to a pocket formed by RPB1, RPB2 and RPB6 at the base of the clamp element. The RPB4-RPB7 subcomplex seems to lock the clamp via RPB7 in the closed conformation thus preventing double-stranded DNA to enter the active site cleft. The RPB4-RPB7 subcomplex binds single-stranded DNA and RNA. This Danio rerio (Zebrafish) protein is DNA-directed RNA polymerase II subunit RPB7 (polr2g).